Here is a 418-residue protein sequence, read N- to C-terminus: Tyrosine--tRNA ligase (418 aa).

Tyr-34 is a binding site for L-tyrosine. Positions 39–48 (PTADSLHLGH) match the 'HIGH' region motif. L-tyrosine is bound by residues Tyr-169 and Gln-173. Positions 229-233 (KFGKS) match the 'KMSKS' region motif. Lys-232 is an ATP binding site. One can recognise an S4 RNA-binding domain in the interval 352 to 418 (NNIVELLVSS…GKKKYFVLTY (67 aa)).

The protein belongs to the class-I aminoacyl-tRNA synthetase family. TyrS type 1 subfamily. As to quaternary structure, homodimer.

The protein localises to the cytoplasm. It carries out the reaction tRNA(Tyr) + L-tyrosine + ATP = L-tyrosyl-tRNA(Tyr) + AMP + diphosphate + H(+). Catalyzes the attachment of tyrosine to tRNA(Tyr) in a two-step reaction: tyrosine is first activated by ATP to form Tyr-AMP and then transferred to the acceptor end of tRNA(Tyr). The chain is Tyrosine--tRNA ligase from Streptococcus pneumoniae (strain CGSP14).